The chain runs to 506 residues: Xaa-Pro aminopeptidase 3 (506 aa).

The transit peptide at 1 to 31 (MLSLLSTPRLVPVIARLRGLSGCMSCLQRRY) directs the protein to the mitochondrion. Residues 54 to 79 (HPHLLRPGEVTPGLSQVEYALRRHKL) are interaction with TNFRSF1B. Residues Tyr-300, Asp-331, Asp-342, His-423, His-430, Glu-450, and Glu-474 each coordinate substrate. Asp-331, Asp-342, and His-423 together coordinate Mn(2+). 2 residues coordinate Mn(2+): Glu-450 and Glu-474.

Belongs to the peptidase M24B family. Homodimer. Interacts with TNFRSF1B/TNFR2 (activated) and TRAF2. Requires Mn(2+) as cofactor. Expressed in the kidney, specifically in intercalated cells, but not in principal cells, of the distal convoluted tubule and cortical collecting duct (at protein level).

The protein localises to the mitochondrion. It is found in the cytoplasm. It catalyses the reaction Release of any N-terminal amino acid, including proline, that is linked to proline, even from a dipeptide or tripeptide.. Functionally, catalyzes the removal of a penultimate prolyl residue from the N-termini of peptides, such as Leu-Pro-Ala. Also shows low activity towards peptides with Ala or Ser at the P1 position. Promotes TNFRSF1B-mediated phosphorylation of MAPK8/JNK1 and MAPK9/JNK2, suggesting a function as an adapter protein for TNFRSF1B; the effect is independent of XPNPEP3 peptidase activity. May inhibit apoptotic cell death induced via TNF-TNFRSF1B signaling. The sequence is that of Xaa-Pro aminopeptidase 3 (Xpnpep3) from Rattus norvegicus (Rat).